We begin with the raw amino-acid sequence, 287 residues long: MPIKKIISRSNSGIHHSTVIDYKKLLTTNKNKPEKSLLVTLKKHGGRNNQGKITVRHQGGRNKRKYRIIDFKRTHYDNIEATVKSIEYDPNRSCFVSLITYANGAKSYIISPDGIKVGDKILASEHPIDIKPGFSMPLAFIPEGTQVHNIELHPKGGGQIARSAGSYARILGQDETGKYVILQLLSGETRKFLKECRATVGVVSNLDHNLVVIGKAGRNRHRGIRPTVRGSAMNPNDHPHGGGEGRSPVGRDAPRTPWGKRHMGVKTRNMKKASTNLIIRNRKGEQY.

Positions 222-266 (RGIRPTVRGSAMNPNDHPHGGGEGRSPVGRDAPRTPWGKRHMGVK) are disordered.

It belongs to the universal ribosomal protein uL2 family. In terms of assembly, part of the 50S ribosomal subunit. Forms a bridge to the 30S subunit in the 70S ribosome.

Functionally, one of the primary rRNA binding proteins. Required for association of the 30S and 50S subunits to form the 70S ribosome, for tRNA binding and peptide bond formation. It has been suggested to have peptidyltransferase activity; this is somewhat controversial. Makes several contacts with the 16S rRNA in the 70S ribosome. This is Large ribosomal subunit protein uL2 from Mycoplasma pneumoniae (strain ATCC 29342 / M129 / Subtype 1) (Mycoplasmoides pneumoniae).